Reading from the N-terminus, the 247-residue chain is Proteasome subunit alpha (247 aa).

It belongs to the peptidase T1A family. In terms of assembly, the 20S proteasome core is composed of 14 alpha and 14 beta subunits that assemble into four stacked heptameric rings, resulting in a barrel-shaped structure. The two inner rings, each composed of seven catalytic beta subunits, are sandwiched by two outer rings, each composed of seven alpha subunits. The catalytic chamber with the active sites is on the inside of the barrel. Has a gated structure, the ends of the cylinder being occluded by the N-termini of the alpha-subunits. Is capped at one or both ends by the proteasome regulatory ATPase, PAN.

The protein localises to the cytoplasm. The formation of the proteasomal ATPase PAN-20S proteasome complex, via the docking of the C-termini of PAN into the intersubunit pockets in the alpha-rings, triggers opening of the gate for substrate entry. Interconversion between the open-gate and close-gate conformations leads to a dynamic regulation of the 20S proteasome proteolysis activity. Functionally, component of the proteasome core, a large protease complex with broad specificity involved in protein degradation. This is Proteasome subunit alpha from Methanosarcina thermophila.